The following is a 329-amino-acid chain: GTP 3',8-cyclase (329 aa).

The Radical SAM core domain occupies 8–234 (AFARKFYYLR…QLRQRSDGPA (227 aa)). Arginine 17 is a binding site for GTP. 2 residues coordinate [4Fe-4S] cluster: cysteine 24 and cysteine 28. S-adenosyl-L-methionine is bound at residue tyrosine 30. A [4Fe-4S] cluster-binding site is contributed by cysteine 31. Position 68 (arginine 68) interacts with GTP. Glycine 72 lines the S-adenosyl-L-methionine pocket. Threonine 99 is a binding site for GTP. Serine 123 lines the S-adenosyl-L-methionine pocket. Lysine 160 is a GTP binding site. Methionine 194 contacts S-adenosyl-L-methionine. Residues cysteine 257 and cysteine 260 each coordinate [4Fe-4S] cluster. 262–264 (RLR) is a binding site for GTP. Residue cysteine 274 coordinates [4Fe-4S] cluster.

It belongs to the radical SAM superfamily. MoaA family. Monomer and homodimer. Requires [4Fe-4S] cluster as cofactor.

The catalysed reaction is GTP + AH2 + S-adenosyl-L-methionine = (8S)-3',8-cyclo-7,8-dihydroguanosine 5'-triphosphate + 5'-deoxyadenosine + L-methionine + A + H(+). Its pathway is cofactor biosynthesis; molybdopterin biosynthesis. Catalyzes the cyclization of GTP to (8S)-3',8-cyclo-7,8-dihydroguanosine 5'-triphosphate. This Salmonella dublin (strain CT_02021853) protein is GTP 3',8-cyclase.